We begin with the raw amino-acid sequence, 162 residues long: Peroxiredoxin-2 (162 aa).

The 159-residue stretch at 4–162 (IAVGDVLPDG…SSADDILKDL (159 aa)) folds into the Thioredoxin domain. Cys-51 (cysteine sulfenic acid (-SOH) intermediate) is an active-site residue.

Belongs to the peroxiredoxin family. Prx5 subfamily. In terms of assembly, monomer. Homodimer. Glutathionylation of C(P) causes the dimer to dissociate. Subsequent reduction of the mixed disulfide bond leads again to dimerization.

It catalyses the reaction [glutaredoxin]-dithiol + a hydroperoxide = [glutaredoxin]-disulfide + an alcohol + H2O. Functionally, thiol-specific peroxidase that catalyzes the reduction of hydrogen peroxide and organic hydroperoxides to water and alcohols, respectively. Can reduce H(2)O(2) and short chain organic, fatty acid, and phospholipid hydroperoxides. Plays a role in cell protection against oxidative stress by detoxifying peroxides. This is Peroxiredoxin-2 from Populus trichocarpa (Western balsam poplar).